Consider the following 562-residue polypeptide: Tripeptidyl-peptidase 1 (562 aa).

An N-terminal signal peptide occupies residues 1–19 (MGLQARLLGLLALVIAGKC). Positions 20-194 (TYNPEPDQRW…PEPQQVGTVS (175 aa)) are cleaved as a propeptide — removed in mature form. A disulfide bridge links C111 with C122. The region spanning 198–562 (GVTPSVLRQR…PALLKTLLNP (365 aa)) is the Peptidase S53 domain. N209 carries an N-linked (GlcNAc...) asparagine glycan. N221 is a glycosylation site (N-linked (GlcNAc...) (high mannose) asparagine). Residues E271 and D275 each act as charge relay system in the active site. N285, N312, and N442 each carry an N-linked (GlcNAc...) asparagine glycan. Disulfide bonds link C364-C525 and C521-C536. The Charge relay system role is filled by S474. Residues D516 and V517 each coordinate Ca(2+). Ca(2+) is bound by residues G538, G540, and D542.

Monomer. Interacts with CLN5. Interacts with CLN3. Requires Ca(2+) as cofactor. In terms of processing, activated by autocatalytic proteolytical processing upon acidification. N-glycosylation is required for processing and activity.

It localises to the lysosome. The protein localises to the melanosome. It carries out the reaction Release of an N-terminal tripeptide from a polypeptide, but also has endopeptidase activity.. Lysosomal serine protease with tripeptidyl-peptidase I activity. May act as a non-specific lysosomal peptidase which generates tripeptides from the breakdown products produced by lysosomal proteinases. Requires substrates with an unsubstituted N-terminus. The polypeptide is Tripeptidyl-peptidase 1 (Tpp1) (Mus musculus (Mouse)).